Here is a 21-residue protein sequence, read N- to C-terminus: Pseudogermin (21 aa).

Belongs to the germin family. In terms of assembly, homotetramer.

It is found in the secreted. The protein resides in the extracellular space. It localises to the apoplast. The protein localises to the cell wall. In terms of biological role, may subsume the role of germin at the low water potentials during embryogenesis. In Triticum aestivum (Wheat), this protein is Pseudogermin.